We begin with the raw amino-acid sequence, 164 residues long: Putative pre-16S rRNA nuclease (164 aa).

It belongs to the YqgF nuclease family.

It localises to the cytoplasm. Could be a nuclease involved in processing of the 5'-end of pre-16S rRNA. This Rhizobium johnstonii (strain DSM 114642 / LMG 32736 / 3841) (Rhizobium leguminosarum bv. viciae) protein is Putative pre-16S rRNA nuclease.